The chain runs to 241 residues: Putative hydrolase 080R (241 aa).

The region spanning phenylalanine 50–leucine 241 is the Nudix hydrolase domain. Positions glycine 136 to threonine 157 match the Nudix box motif. Mg(2+) contacts are provided by glutamate 151, glutamate 155, and aspartate 204.

The protein belongs to the Nudix hydrolase family.

This Aedes vexans (Inland floodwater mosquito) protein is Putative hydrolase 080R.